We begin with the raw amino-acid sequence, 409 residues long: MEPNCVQFLENRTILVTGASGFLAKVLVERILRLQPNVKRLYLLVRASDKKSAEQRYDVALGINTFGAINVLNFAKKCVKPKLLLHVSTVYVCGERPGHIVEKHFAMGESLNGKNKVDINTERRLADQKSKQFKEQGCSEEETEQAMKDFGLKRARLYGWPNTYVFTKAMGEMLLGHYRETMPIVIIRPTIITSTFSDPFPGWIEGLKTVDSVIIFYGKGILKCFLVDQKTVCDIIPVDMVVNAMIAIAADHCHDSGSHTVYHVGSSNQNPVIYKQIYEMMSRYFMKSPLVGRNGMLIVPKVTRISTLARFRVYTNLRYKLPIQILGLLSVISLSQRDKFALHNRKFKMAMRLVKLYKPYVLFKGIFDDKNMETLRIKNEAKDMEKLFGTNPKCIDWEDYFMIRISLAS.

This sequence belongs to the fatty acyl-CoA reductase family.

The protein is Putative fatty acyl-CoA reductase 7 (FAR7) of Arabidopsis thaliana (Mouse-ear cress).